Consider the following 506-residue polypeptide: Aspartic proteinase A1 (506 aa).

Residues 1-24 (MKIYSRTVAVSLIVSFLLCFSAFA) form the signal peptide. The propeptide at 25–64 (ERNDGTFRVGLKKLKLDSKNRLAARVESKQEKPLRAYRLG) is activation peptide. The Peptidase A1 domain occupies 82-503 (YYGEIAIGTP…DFGNEQVGFA (422 aa)). Residue D100 is part of the active site. 2 disulfide bridges follow: C113–C119 and C278–C282. Residue D287 is part of the active site. Residues 312–417 (VVSQQCKTVV…NELCERLPSP (106 aa)) enclose the Saposin B-type domain. Intrachain disulfides connect C317/C411, C342/C383, C348/C380, and C425/C462. N397 carries N-linked (GlcNAc...) asparagine glycosylation.

The protein belongs to the peptidase A1 family. Expressed in roots, leaves, stems, petals, carpels, seed pods and dry seeds.

Its subcellular location is the vacuole. Functionally, involved in the breakdown of propeptides of storage proteins in protein-storage vacuoles. Possesses aspartic protease activity in vitro. This is Aspartic proteinase A1 (APA1) from Arabidopsis thaliana (Mouse-ear cress).